Consider the following 622-residue polypeptide: Probable potassium transport system protein Kup (622 aa).

12 consecutive transmembrane segments (helical) span residues 8 to 28 (LAAL…TSVL), 50 to 70 (ILSI…VVLV), 103 to 123 (LAVG…TPAI), 137 to 157 (PHFK…LFAV), 168 to 188 (FFGP…LAHI), 203 to 223 (ALGF…AVVL), 247 to 267 (WFGV…ALLL), 285 to 305 (ALIP…QALI), 337 to 357 (IYMP…VVMF), 366 to 386 (AYGI…FFVI), 393 to 413 (PLAL…AFFA), and 419 to 439 (LFQG…LMMT).

Belongs to the HAK/KUP transporter (TC 2.A.72) family.

It localises to the cell inner membrane. The catalysed reaction is K(+)(in) + H(+)(in) = K(+)(out) + H(+)(out). Functionally, transport of potassium into the cell. Likely operates as a K(+):H(+) symporter. This Verminephrobacter eiseniae (strain EF01-2) protein is Probable potassium transport system protein Kup.